Consider the following 293-residue polypeptide: Ubiquinone biosynthesis protein COQ9-B, mitochondrial (293 aa).

A disordered region spans residues 21 to 73 (LRSDDQKQPPFSSSSTHAETPEHAEEQYQQQQSPPRYTDQAGEESEDYESEEQ). The span at 29–38 (PPFSSSSTHA) shows a compositional bias: polar residues. Positions 61 to 72 (AGEESEDYESEE) are enriched in acidic residues. Arginine 219 serves as a coordination point for a 1,2-diacylglycero-3-phosphoethanolamine.

The protein belongs to the COQ9 family. In terms of assembly, homodimer. Heterodimer; two heterodimers of COQ7:COQ9 come together on the same side of the lipid pseudo-bilayer and form a curved tetramer with a hydrophobic surface suitable for membrane interaction. These two tetramers assemble into a soluble octamer with a pseudo-bilayer of lipids captured within. Interacts with COQ7; this interaction allows ubiquinone (CoQ) isoprene intermediates presentation to COQ7 and facilitates the COQ7-mediated hydroxylase step.

The protein localises to the mitochondrion. Its pathway is cofactor biosynthesis; ubiquinone biosynthesis. Functionally, membrane-associated protein that warps the membrane surface to access and bind aromatic isoprenes with high specificity, including ubiquinone (CoQ) isoprene intermediates and presents them directly to COQ7, therefore facilitating the COQ7-mediated hydroxylase step. Participates in the biosynthesis of coenzyme Q, also named ubiquinone, an essential lipid-soluble electron transporter for aerobic cellular respiration. This is Ubiquinone biosynthesis protein COQ9-B, mitochondrial (coq9-b) from Xenopus laevis (African clawed frog).